A 352-amino-acid polypeptide reads, in one-letter code: MNFIHDYRSPRVIFGPDSLARLPQELERLGIDRALVLTTPEQAPLGRQVAEPVIGHVAAFYDGATMHVPALVAEEACKIARTSEANGVIAIGGGSTIGLAKIVALRTELPIVAVPTTYAGSEMTSIFGITEGGVKKTGRDARVMPRAVIYEPRLTLELPLSISVTSAINAIAHAVEGLYAPDATPLLTIMAQEGIAATVRAISRMYQSPRDLQARGDALYGAWLCASVLGNVSMALHHKLCHTLGGTLDLPHAQTHTVVLPHALAYNARAVPDAMRVLRIALGHDDPPTALYELARDNGAPVALRDLGMREEDIEHVGDLALQDRYPNPRELDRDALLALLRDAYHGRPPSA.

It belongs to the iron-containing alcohol dehydrogenase family.

The enzyme catalyses 3-oxoadipate + NAD(+) = maleylacetate + NADH + H(+). It catalyses the reaction 3-oxoadipate + NADP(+) = maleylacetate + NADPH + H(+). Its pathway is aromatic compound metabolism; 3-chlorocatechol degradation. The polypeptide is Maleylacetate reductase (clcE) (Pseudomonas knackmussii (strain DSM 6978 / CCUG 54928 / LMG 23759 / B13)).